The chain runs to 801 residues: Leucine--tRNA ligase (801 aa).

Residues 40–51 (PYPSGAGLHVGH) carry the 'HIGH' region motif. Residues 576-580 (KMSKS) carry the 'KMSKS' region motif. Lys579 is a binding site for ATP.

Belongs to the class-I aminoacyl-tRNA synthetase family.

Its subcellular location is the cytoplasm. It catalyses the reaction tRNA(Leu) + L-leucine + ATP = L-leucyl-tRNA(Leu) + AMP + diphosphate. The chain is Leucine--tRNA ligase from Exiguobacterium sibiricum (strain DSM 17290 / CCUG 55495 / CIP 109462 / JCM 13490 / 255-15).